We begin with the raw amino-acid sequence, 188 residues long: Elongation factor P-like protein (188 aa).

It belongs to the elongation factor P family.

The sequence is that of Elongation factor P-like protein from Stenotrophomonas maltophilia (strain K279a).